The sequence spans 293 residues: Pyridoxal 5'-phosphate synthase subunit PdxS (293 aa).

Aspartate 25 serves as a coordination point for D-ribose 5-phosphate. Lysine 82 (schiff-base intermediate with D-ribose 5-phosphate) is an active-site residue. Glycine 154 provides a ligand contact to D-ribose 5-phosphate. Arginine 166 contributes to the D-glyceraldehyde 3-phosphate binding site. D-ribose 5-phosphate contacts are provided by residues glycine 215 and 236-237 (GS).

Belongs to the PdxS/SNZ family. In terms of assembly, in the presence of PdxT, forms a dodecamer of heterodimers.

It catalyses the reaction aldehydo-D-ribose 5-phosphate + D-glyceraldehyde 3-phosphate + L-glutamine = pyridoxal 5'-phosphate + L-glutamate + phosphate + 3 H2O + H(+). The protein operates within cofactor biosynthesis; pyridoxal 5'-phosphate biosynthesis. Functionally, catalyzes the formation of pyridoxal 5'-phosphate from ribose 5-phosphate (RBP), glyceraldehyde 3-phosphate (G3P) and ammonia. The ammonia is provided by the PdxT subunit. Can also use ribulose 5-phosphate and dihydroxyacetone phosphate as substrates, resulting from enzyme-catalyzed isomerization of RBP and G3P, respectively. The chain is Pyridoxal 5'-phosphate synthase subunit PdxS from Thermotoga petrophila (strain ATCC BAA-488 / DSM 13995 / JCM 10881 / RKU-1).